We begin with the raw amino-acid sequence, 344 residues long: SUMO-activating enzyme subunit 1 (344 aa).

Belongs to the ubiquitin-activating E1 family. Heterodimer of sae1 and uba2/sae2. The heterodimer corresponds to the two domains that are encoded on a single polypeptide chain in ubiquitin-activating enzyme E1. Interacts with ube2i.

The protein localises to the nucleus. It functions in the pathway protein modification; protein sumoylation. The heterodimer acts as an E1 ligase for sumo1, sumo2, and sumo3. It mediates ATP-dependent activation of sumo proteins followed by formation of a thioester bond between a sumo protein and a conserved active site cysteine residue on uba2/sae2. The sequence is that of SUMO-activating enzyme subunit 1 (sae1) from Xenopus laevis (African clawed frog).